Consider the following 216-residue polypeptide: Large ribosomal subunit protein uL24m (216 aa).

The N-terminal 9 residues, 1–9 (MRLTALLSM), are a transit peptide targeting the mitochondrion. Residues 56 to 89 (VVRGDTVEVLSGKEKGKQGKVAQVIRARNWVILE) form the KOW domain. Residues 167–186 (PQQWKDGPKDTSPEDTLQKT) are disordered.

It belongs to the universal ribosomal protein uL24 family. In terms of assembly, component of the mitochondrial ribosome large subunit (39S) which comprises a 16S rRNA and about 50 distinct proteins.

The protein resides in the mitochondrion. The protein is Large ribosomal subunit protein uL24m (mrpl24) of Danio rerio (Zebrafish).